The sequence spans 333 residues: Fructose-1,6-bisphosphatase class 1 (333 aa).

Residues Glu89, Asp112, Leu114, and Asp115 each contribute to the Mg(2+) site. Substrate contacts are provided by residues 115 to 118 (DGSS), Asn208, Tyr241, and Lys271. Glu277 is a Mg(2+) binding site.

This sequence belongs to the FBPase class 1 family. In terms of assembly, homotetramer. Mg(2+) is required as a cofactor.

The protein localises to the cytoplasm. It catalyses the reaction beta-D-fructose 1,6-bisphosphate + H2O = beta-D-fructose 6-phosphate + phosphate. The protein operates within carbohydrate biosynthesis; gluconeogenesis. The protein is Fructose-1,6-bisphosphatase class 1 of Haemophilus influenzae (strain ATCC 51907 / DSM 11121 / KW20 / Rd).